The sequence spans 294 residues: UPF0761 membrane protein YPK_4186 (294 aa).

The next 7 helical transmembrane spans lie at 44–64 (LLSL…FPMF), 67–87 (ISIK…GDII), 108–128 (GLIV…NIIW), 136–156 (LVFS…LVGA), 185–205 (VFPL…VPTV), 212–232 (ALIG…GFAM), and 246–266 (VLAV…IVLL).

Belongs to the UPF0761 family.

Its subcellular location is the cell inner membrane. This is UPF0761 membrane protein YPK_4186 from Yersinia pseudotuberculosis serotype O:3 (strain YPIII).